We begin with the raw amino-acid sequence, 141 residues long: Antifungal protein ginkbilobin-like protein 1 (141 aa).

Positions 1-32 (MSISSKFQLRSSTSLLLLVALMVVMGMDGAAA) are cleaved as a signal peptide. In terms of domain architecture, Gnk2-homologous spans 36 to 141 (TNFVSSACNT…CFIQYEQHSF (106 aa)). 3 disulfide bridges follow: Cys-43–Cys-119, Cys-95–Cys-104, and Cys-107–Cys-132. Asn-44 provides a ligand contact to alpha-D-mannopyranose. Arg-126 and Glu-137 together coordinate alpha-D-mannopyranose.

In terms of biological role, exerts antifungal activity through its carbohydrate-binding specificity. The protein is Antifungal protein ginkbilobin-like protein 1 of Picea glauca (White spruce).